Reading from the N-terminus, the 795-residue chain is Phenylalanine--tRNA ligase beta subunit (795 aa).

Residues 39-148 (AGEFNGVVVG…ADAPIGVDVR (110 aa)) enclose the tRNA-binding domain. In terms of domain architecture, B5 spans 401 to 476 (PKQATITLRR…RIYGYNNIPD (76 aa)). Mg(2+)-binding residues include D454, D460, E463, and E464. The FDX-ACB domain maps to 701–794 (SRFPANRRDI…LKQRFQASLR (94 aa)).

This sequence belongs to the phenylalanyl-tRNA synthetase beta subunit family. Type 1 subfamily. Tetramer of two alpha and two beta subunits. The cofactor is Mg(2+).

It localises to the cytoplasm. It catalyses the reaction tRNA(Phe) + L-phenylalanine + ATP = L-phenylalanyl-tRNA(Phe) + AMP + diphosphate + H(+). This chain is Phenylalanine--tRNA ligase beta subunit, found in Yersinia pestis.